The following is a 452-amino-acid chain: MTARNSLTIVLAAGEGTRMRSSLPKVLNPVAGRSLLAHVLSAAPHGERDRLAVVIGPDHRAVGDEAKRVRSDAAIHIQAQRLGTAHAVLAAREAIAEGADDLLIAFGDTPLISAETFARLREPLHDGSSLVVLGFRAADPTGYGRLVVQDGKLTAIREQADASADELKITLCNAGVMAIDGKIALDVLDKIGNANAKGEYYLTDAVGIVRDLGLIASVIETSEDEVRGINTKAQLAEAETVMQTRLRLAAMAAGVTLIAPETVYLAADTTFGKDVVIEPFVVIGPGVSIADGAVIHSFSHLAEAKIGSKAQVGPYARLRPGTSLGDGAKIGNFVETKAAQIDAGAKVNHLTYIGDAHIGASANIGAGTITCNYDGFDKHKTEIGAGAFIGSNSSLVAPVKIGTGAYVGSGSVITKDVPDDALAVERNVQTAKDGWAKRFRDAKSRHRKPKAH.

The interval 1–232 is pyrophosphorylase; the sequence is MTARNSLTIV…EDEVRGINTK (232 aa). Residues 11–14, lysine 25, glutamine 78, and 83–84 contribute to the UDP-N-acetyl-alpha-D-glucosamine site; these read LAAG and GT. Position 108 (aspartate 108) interacts with Mg(2+). The UDP-N-acetyl-alpha-D-glucosamine site is built by glycine 144, glutamate 158, asparagine 173, and asparagine 230. Asparagine 230 lines the Mg(2+) pocket. The interval 233–253 is linker; it reads AQLAEAETVMQTRLRLAAMAA. The N-acetyltransferase stretch occupies residues 254–452; that stretch reads GVTLIAPETV…KSRHRKPKAH (199 aa). UDP-N-acetyl-alpha-D-glucosamine is bound by residues arginine 319 and lysine 337. The Proton acceptor role is filled by histidine 349. Positions 352 and 363 each coordinate UDP-N-acetyl-alpha-D-glucosamine. Residues alanine 366, 372 to 373, serine 391, serine 409, and arginine 426 contribute to the acetyl-CoA site; that span reads NY.

This sequence in the N-terminal section; belongs to the N-acetylglucosamine-1-phosphate uridyltransferase family. In the C-terminal section; belongs to the transferase hexapeptide repeat family. Homotrimer. Mg(2+) serves as cofactor.

The protein resides in the cytoplasm. The enzyme catalyses alpha-D-glucosamine 1-phosphate + acetyl-CoA = N-acetyl-alpha-D-glucosamine 1-phosphate + CoA + H(+). The catalysed reaction is N-acetyl-alpha-D-glucosamine 1-phosphate + UTP + H(+) = UDP-N-acetyl-alpha-D-glucosamine + diphosphate. Its pathway is nucleotide-sugar biosynthesis; UDP-N-acetyl-alpha-D-glucosamine biosynthesis; N-acetyl-alpha-D-glucosamine 1-phosphate from alpha-D-glucosamine 6-phosphate (route II): step 2/2. It functions in the pathway nucleotide-sugar biosynthesis; UDP-N-acetyl-alpha-D-glucosamine biosynthesis; UDP-N-acetyl-alpha-D-glucosamine from N-acetyl-alpha-D-glucosamine 1-phosphate: step 1/1. The protein operates within bacterial outer membrane biogenesis; LPS lipid A biosynthesis. Its function is as follows. Catalyzes the last two sequential reactions in the de novo biosynthetic pathway for UDP-N-acetylglucosamine (UDP-GlcNAc). The C-terminal domain catalyzes the transfer of acetyl group from acetyl coenzyme A to glucosamine-1-phosphate (GlcN-1-P) to produce N-acetylglucosamine-1-phosphate (GlcNAc-1-P), which is converted into UDP-GlcNAc by the transfer of uridine 5-monophosphate (from uridine 5-triphosphate), a reaction catalyzed by the N-terminal domain. This Rhodopseudomonas palustris (strain TIE-1) protein is Bifunctional protein GlmU.